The following is a 449-amino-acid chain: MSVRFSSASRRLGSVRLSSPGAALGAGNTCGVPGIGSGFSCAFGGSSLAGGLGMGGASCGAFTVNEHGLLSGNEKVTMQNLNDRLASYLENVQALEEANADLEQKIKDWYEKFGPGSCRGLDHDYSRYFPIIDDLRTQIISATAQNANIVLQNDNARLTADDFRMKYENELALHQSVDADINGLRRVLDELTLCRTDLEVQLETLSEELAYLKKNHEEEMQALQCAAGGNVNVEMNAAPGVDLTVLLNNMRAEYEALAEQNRRDAEAWFQEKSASLQQQISDDAGATTSARNELTEMKRTLQTLEIELQSLLAMKHSLECSLTETEGNYCTQLAQIQAQISALEEQLHQVRTETEGQKLEYEQLLNVKAHLEKEIETYCLLIGGDEGSCVKSKGQGGPGNQTKDSPKTAIVKTVVEELDPRGKVLSSRVHTLEEKSTKVNNKNEQRIPS.

The tract at residues 1–73 (MSVRFSSASR…VNEHGLLSGN (73 aa)) is head. The segment at 74 to 109 (EKVTMQNLNDRLASYLENVQALEEANADLEQKIKDW) is coil 1A. The IF rod domain maps to 74-389 (EKVTMQNLND…LLIGGDEGSC (316 aa)). Residues 110–131 (YEKFGPGSCRGLDHDYSRYFPI) form a linker 1 region. The segment at 132 to 223 (IDDLRTQIIS…KNHEEEMQAL (92 aa)) is coil 1B. The linker 12 stretch occupies residues 224–246 (QCAAGGNVNVEMNAAPGVDLTVL). The coil 2 stretch occupies residues 247-385 (LNNMRAEYEA…ETYCLLIGGD (139 aa)). The tract at residues 386–449 (EGSCVKSKGQ…NNKNEQRIPS (64 aa)) is tail. A disordered region spans residues 425-449 (LSSRVHTLEEKSTKVNNKNEQRIPS). Over residues 430–449 (HTLEEKSTKVNNKNEQRIPS) the composition is skewed to basic and acidic residues.

It belongs to the intermediate filament family. As to quaternary structure, heterotetramer of two type I and two type II keratins. Interacts with KRT6A to form filaments.

The protein localises to the cytoplasm. Essential for the proper assembly of type I and type II keratin protein complexes and formation of keratin intermediate filaments in the inner root sheath (irs). The polypeptide is Keratin, type I cytoskeletal 27 (Rattus norvegicus (Rat)).